We begin with the raw amino-acid sequence, 434 residues long: Adenylosuccinate synthetase (434 aa).

GTP contacts are provided by residues 22–28 (GDEGKGK) and 50–52 (GHT). Residue aspartate 23 is the Proton acceptor of the active site. Positions 23 and 50 each coordinate Mg(2+). Residues 23 to 26 (DEGK), 48 to 51 (NAGH), threonine 139, arginine 153, glutamine 234, threonine 249, and arginine 313 each bind IMP. Catalysis depends on histidine 51, which acts as the Proton donor. Substrate is bound at residue 309-315 (ATTGRKR). GTP is bound by residues arginine 315, 341–343 (KLD), and 423–425 (SVG).

This sequence belongs to the adenylosuccinate synthetase family. In terms of assembly, homodimer. The cofactor is Mg(2+).

It is found in the cytoplasm. The enzyme catalyses IMP + L-aspartate + GTP = N(6)-(1,2-dicarboxyethyl)-AMP + GDP + phosphate + 2 H(+). It participates in purine metabolism; AMP biosynthesis via de novo pathway; AMP from IMP: step 1/2. Its function is as follows. Plays an important role in the de novo pathway of purine nucleotide biosynthesis. Catalyzes the first committed step in the biosynthesis of AMP from IMP. This Chlorobium phaeobacteroides (strain DSM 266 / SMG 266 / 2430) protein is Adenylosuccinate synthetase.